Here is a 62-residue protein sequence, read N- to C-terminus: Amolopin-p-MT1 (62 aa).

Positions 1–22 are cleaved as a signal peptide; sequence MFTLKKSLLLLFFLGTISLSLC. Residues 23–42 constitute a propeptide, removed in mature form; sequence EQERGADEEENGGEVTEEEV.

This sequence belongs to the frog skin active peptide (FSAP) family. Brevinin subfamily. As to expression, expressed by the skin glands.

It is found in the secreted. Functionally, antimicrobial peptide. Active against a variety of Gram-negative and Gram-positive bacterial strains. Not active against fungi. Shows weak hemolytic activity against human erythrocytes. The protein is Amolopin-p-MT1 of Amolops mantzorum (Sichuan torrent frog).